The chain runs to 782 residues: Transcription factor SOX-30 (782 aa).

Disordered stretches follow at residues 1–37 (MERARPEPPPPPPPPPRQPPRPTPPRPLRPAPPAQPV), 95–117 (LPPGGPGVPPAPDEGAAAAAAAA), and 139–226 (PPQS…DALK). Composition is skewed to pro residues over residues 7 to 35 (EPPPPPPPPPRQPPRPTPPRPLRPAPPAQ) and 97 to 106 (PGGPGVPPAP). Basic and acidic residues predominate over residues 203–226 (LDGRRSDEKKAKLEAEEAPRDALK). A DNA-binding region (HMG box) is located at residues 366 to 434 (VKRPMNAFMV…KHREEFPGWV (69 aa)). Disordered regions lie at residues 501-604 (PTPA…STCP), 704-724 (YPDEHTHSEDSRSCESMDGPP), and 756-782 (ASAPSGVQQVNVTDSDEEEEEKVLRNL). A compositionally biased stretch (polar residues) spans 512-522 (TLFQPSVSSTG). Residues 525-538 (AVPPPSLTPRPSLP) show a composition bias toward pro residues. Over residues 555 to 574 (SGSSRSVKRSTPGSLESTTR) the composition is skewed to polar residues. Residues 704 to 718 (YPDEHTHSEDSRSCE) are compositionally biased toward basic and acidic residues.

As to quaternary structure, interacts with CTNNB1, competitively inhibiting CTNNB1-TCF7L2/TCF4 interaction. Expressed in the lung (at protein level). Expressed in testes (at protein level). Expressed in preleptotene spermatocytes, round spermatids, and elongated spermatids in the testis (at protein level). Expressed in pachytene spermatocytes during stages 3 to 8 of spermatogenesis (at protein level). Increased expression in diplotene spermatocytes at stage 9-11 and in metaphase spermatocytes or secondary spermatocytes at stage 12. Expressed in ovaries.

It localises to the nucleus. Its subcellular location is the cytoplasm. Functionally, acts both as a transcriptional activator and a repressor. Binds to the DNA sequence 5'-ACAAT-3' and shows a preference for guanine residues surrounding this core motif. Binds to its own promoter and activates its own transcription. Required to activate the expression of postmeiotic genes involved in spermiogenesis. Binds to the promoter region of CTNNB1 and represses its transcription which leads to inhibition of Wnt signaling. Also inhibits Wnt signaling by binding to the CTNNB1 protein, preventing interaction of CTNNB1 with TCF7L2/TCF4. The polypeptide is Transcription factor SOX-30 (Sox30) (Mus musculus (Mouse)).